Here is a 259-residue protein sequence, read N- to C-terminus: ATP synthase subunit a (259 aa).

The next 5 membrane-spanning stretches (helical) occupy residues 29–49 (TVNIDSMIFSVILGALFIWIF), 90–110 (IAPLALTVFIWVFLMNLMDLI), 134–154 (DVNITMSMALGVFALIIIYSI), 208–228 (LVFILIAGLLPWWSQWLLSVP), and 230–250 (ALFHILVITLQAFIFMVLTIV).

It belongs to the ATPase A chain family. F-type ATPases have 2 components, CF(1) - the catalytic core - and CF(0) - the membrane proton channel. CF(1) has five subunits: alpha(3), beta(3), gamma(1), delta(1), epsilon(1). CF(0) has three main subunits: a(1), b(2) and c(9-12). The alpha and beta chains form an alternating ring which encloses part of the gamma chain. CF(1) is attached to CF(0) by a central stalk formed by the gamma and epsilon chains, while a peripheral stalk is formed by the delta and b chains.

It localises to the cell inner membrane. Key component of the proton channel; it plays a direct role in the translocation of protons across the membrane. In Aeromonas salmonicida (strain A449), this protein is ATP synthase subunit a.